We begin with the raw amino-acid sequence, 709 residues long: Elongation factor G (709 aa).

Residues 9-292 (AYYRNIGISA…AVVEYLPSPT (284 aa)) form the tr-type G domain. Residues 18–25 (AHIDAGKT), 89–93 (DTPGH), and 143–146 (NKMD) each bind GTP.

Belongs to the TRAFAC class translation factor GTPase superfamily. Classic translation factor GTPase family. EF-G/EF-2 subfamily.

It localises to the cytoplasm. Functionally, catalyzes the GTP-dependent ribosomal translocation step during translation elongation. During this step, the ribosome changes from the pre-translocational (PRE) to the post-translocational (POST) state as the newly formed A-site-bound peptidyl-tRNA and P-site-bound deacylated tRNA move to the P and E sites, respectively. Catalyzes the coordinated movement of the two tRNA molecules, the mRNA and conformational changes in the ribosome. This Blochmanniella floridana protein is Elongation factor G.